A 174-amino-acid polypeptide reads, in one-letter code: Calcineurin subunit B (174 aa).

EF-hand domains are found at residues 21–56, 60–88, 90–125, and 131–166; these read EEIE…SSNP, RLMD…FSGK, SKLD…MVGK, and ELQQ…KSVA. The Ca(2+) site is built by aspartate 34, aspartate 36, serine 38, threonine 40, glutamate 45, aspartate 66, aspartate 68, asparagine 70, threonine 72, glutamate 77, aspartate 103, aspartate 105, aspartate 107, tyrosine 109, glutamate 114, aspartate 144, aspartate 146, aspartate 148, arginine 150, and glutamate 155.

Belongs to the calcineurin regulatory subunit family. As to quaternary structure, composed of a catalytic subunit (A) and a regulatory subunit (B).

In terms of biological role, regulatory subunit of calcineurin, a calcium-dependent, calmodulin stimulated protein phosphatase. Confers calcium sensitivity. This chain is Calcineurin subunit B (CNB1), found in Debaryomyces hansenii (strain ATCC 36239 / CBS 767 / BCRC 21394 / JCM 1990 / NBRC 0083 / IGC 2968) (Yeast).